A 296-amino-acid chain; its full sequence is 4-hydroxybenzoate octaprenyltransferase (296 aa).

Helical transmembrane passes span 28 to 48 (IGTLLLLWPTYWALWLASDGI), 51 to 71 (LAVLAAFTIGTFLMRSAGCVI), 102 to 122 (LLLTAFLCLLAALCLIPLNHL), 143 to 163 (FFPIPQLYLGLAFSFGIPMAF), 174 to 194 (AWILFAANVLWTLAYDTVYAM), 212 to 232 (FGRYDIAAVMLCHGGFTLLMA), 233 to 253 (VLGAVIGAAWAYWTAIPIVLL), and 274 to 294 (FLANNRIGWVWFTAIFAHTFF).

This sequence belongs to the UbiA prenyltransferase family. The cofactor is Mg(2+).

It is found in the cell inner membrane. The catalysed reaction is all-trans-octaprenyl diphosphate + 4-hydroxybenzoate = 4-hydroxy-3-(all-trans-octaprenyl)benzoate + diphosphate. It participates in cofactor biosynthesis; ubiquinone biosynthesis. Functionally, catalyzes the prenylation of para-hydroxybenzoate (PHB) with an all-trans polyprenyl group. Mediates the second step in the final reaction sequence of ubiquinone-8 (UQ-8) biosynthesis, which is the condensation of the polyisoprenoid side chain with PHB, generating the first membrane-bound Q intermediate 3-octaprenyl-4-hydroxybenzoate. The protein is 4-hydroxybenzoate octaprenyltransferase of Neisseria meningitidis serogroup B (strain ATCC BAA-335 / MC58).